A 471-amino-acid polypeptide reads, in one-letter code: 3-isopropylmalate dehydratase large subunit (471 aa).

[4Fe-4S] cluster-binding residues include Cys351, Cys412, and Cys415.

The protein belongs to the aconitase/IPM isomerase family. LeuC type 1 subfamily. In terms of assembly, heterodimer of LeuC and LeuD. The cofactor is [4Fe-4S] cluster.

It carries out the reaction (2R,3S)-3-isopropylmalate = (2S)-2-isopropylmalate. Its pathway is amino-acid biosynthesis; L-leucine biosynthesis; L-leucine from 3-methyl-2-oxobutanoate: step 2/4. In terms of biological role, catalyzes the isomerization between 2-isopropylmalate and 3-isopropylmalate, via the formation of 2-isopropylmaleate. This Hahella chejuensis (strain KCTC 2396) protein is 3-isopropylmalate dehydratase large subunit.